A 269-amino-acid polypeptide reads, in one-letter code: Expansin-A32 (269 aa).

The first 25 residues, 1 to 25 (MWCTWALGRVVLAVVFLVALAAGDA), serve as a signal peptide directing secretion. The Expansin-like EG45 domain maps to 60–174 (DGACGYKDTS…RRVPCVKVGG (115 aa)). The Expansin-like CBD domain maps to 184-264 (YFNLVMVSNV…DWQFGVTYQA (81 aa)).

The protein belongs to the expansin family. Expansin A subfamily.

It is found in the secreted. The protein resides in the cell wall. It localises to the membrane. May cause loosening and extension of plant cell walls by disrupting non-covalent bonding between cellulose microfibrils and matrix glucans. No enzymatic activity has been found. May be required for rapid internodal elongation in deepwater rice during submergence. The sequence is that of Expansin-A32 (EXPA32) from Oryza sativa subsp. japonica (Rice).